A 442-amino-acid polypeptide reads, in one-letter code: DNA N(6)-methyladenine demethylase ALKBH1D (442 aa).

Over residues 135–144 (SMVHFDSTNP) the composition is skewed to polar residues. A disordered region spans residues 135–185 (SMVHFDSTNPSSSSKSSQSQNLKIRKVRNHRNSGFKSRDQSPQRIKDPPPF). The segment covering 145–154 (SSSSKSSQSQ) has biased composition (low complexity). Basic residues predominate over residues 157 to 167 (KIRKVRNHRNS). Residues 170 to 183 (KSRDQSPQRIKDPP) show a composition bias toward basic and acidic residues. Residues 332-442 (SPDICIVNFY…GRLNLTFRHF (111 aa)) enclose the Fe2OG dioxygenase domain. 339–341 (NFY) is a binding site for 2-oxoglutarate. Positions 350, 352, and 410 each coordinate Fe cation. Position 434–440 (434–440 (RLNLTFR)) interacts with 2-oxoglutarate.

Belongs to the alkB family. Fe(2+) is required as a cofactor. Expressed at low levels in roots, seedlings and rosette leaves, but barely in cauline leaves, stems, siliques and flowers.

It localises to the nucleus. Its subcellular location is the cytoplasm. It carries out the reaction an N(6)-methyl-2'-deoxyadenosine in DNA + 2-oxoglutarate + O2 = a 2'-deoxyadenosine in DNA + formaldehyde + succinate + CO2. In terms of biological role, dioxygenase that catalyzes DNA N(6)-methyladenine (6 mA) demethylation to modulate gene expression and regulate seed germination. The chain is DNA N(6)-methyladenine demethylase ALKBH1D from Arabidopsis thaliana (Mouse-ear cress).